We begin with the raw amino-acid sequence, 809 residues long: Eukaryotic translation initiation factor 3 subunit C (809 aa).

Residues 1 to 102 (MSRFFAASYE…DSDESDEASK (102 aa)) form a disordered region. Acidic residues-rich tracts occupy residues 18–30 (SEEDLLSSSEEEL) and 37–59 (SEEESDDSFFNDSESESDFDSDD). The 176-residue stretch at 605–780 (FHEHINLDLI…SVLSIAKGAE (176 aa)) folds into the PCI domain.

It belongs to the eIF-3 subunit C family. As to quaternary structure, component of the eukaryotic translation initiation factor 3 (eIF-3) complex.

The protein localises to the cytoplasm. Component of the eukaryotic translation initiation factor 3 (eIF-3) complex, which is involved in protein synthesis of a specialized repertoire of mRNAs and, together with other initiation factors, stimulates binding of mRNA and methionyl-tRNAi to the 40S ribosome. The eIF-3 complex specifically targets and initiates translation of a subset of mRNAs involved in cell proliferation. This chain is Eukaryotic translation initiation factor 3 subunit C, found in Vanderwaltozyma polyspora (strain ATCC 22028 / DSM 70294 / BCRC 21397 / CBS 2163 / NBRC 10782 / NRRL Y-8283 / UCD 57-17) (Kluyveromyces polysporus).